The chain runs to 241 residues: ATP phosphoribosyltransferase (241 aa).

Belongs to the ATP phosphoribosyltransferase family. Short subfamily. In terms of assembly, heteromultimer composed of HisG and HisZ subunits.

Its subcellular location is the cytoplasm. It catalyses the reaction 1-(5-phospho-beta-D-ribosyl)-ATP + diphosphate = 5-phospho-alpha-D-ribose 1-diphosphate + ATP. It participates in amino-acid biosynthesis; L-histidine biosynthesis; L-histidine from 5-phospho-alpha-D-ribose 1-diphosphate: step 1/9. In terms of biological role, catalyzes the condensation of ATP and 5-phosphoribose 1-diphosphate to form N'-(5'-phosphoribosyl)-ATP (PR-ATP). Has a crucial role in the pathway because the rate of histidine biosynthesis seems to be controlled primarily by regulation of HisG enzymatic activity. In Gluconobacter oxydans (strain 621H) (Gluconobacter suboxydans), this protein is ATP phosphoribosyltransferase.